A 488-amino-acid polypeptide reads, in one-letter code: UDP-N-acetylmuramoyl-L-alanyl-D-glutamate--2,6-diaminopimelate ligase (488 aa).

UDP-N-acetyl-alpha-D-muramoyl-L-alanyl-D-glutamate is bound at residue serine 31. 109 to 115 (GTNGKTS) contacts ATP. UDP-N-acetyl-alpha-D-muramoyl-L-alanyl-D-glutamate is bound by residues asparagine 150, 151–152 (TT), serine 178, and arginine 186. Lysine 218 is subject to N6-carboxylysine. Meso-2,6-diaminopimelate-binding positions include arginine 384, 408-411 (DNPR), glycine 458, and glutamate 462. The short motif at 408–411 (DNPR) is the Meso-diaminopimelate recognition motif element.

It belongs to the MurCDEF family. MurE subfamily. Requires Mg(2+) as cofactor. In terms of processing, carboxylation is probably crucial for Mg(2+) binding and, consequently, for the gamma-phosphate positioning of ATP.

Its subcellular location is the cytoplasm. It carries out the reaction UDP-N-acetyl-alpha-D-muramoyl-L-alanyl-D-glutamate + meso-2,6-diaminopimelate + ATP = UDP-N-acetyl-alpha-D-muramoyl-L-alanyl-gamma-D-glutamyl-meso-2,6-diaminopimelate + ADP + phosphate + H(+). It participates in cell wall biogenesis; peptidoglycan biosynthesis. Functionally, catalyzes the addition of meso-diaminopimelic acid to the nucleotide precursor UDP-N-acetylmuramoyl-L-alanyl-D-glutamate (UMAG) in the biosynthesis of bacterial cell-wall peptidoglycan. The chain is UDP-N-acetylmuramoyl-L-alanyl-D-glutamate--2,6-diaminopimelate ligase from Bacillus licheniformis (strain ATCC 14580 / DSM 13 / JCM 2505 / CCUG 7422 / NBRC 12200 / NCIMB 9375 / NCTC 10341 / NRRL NRS-1264 / Gibson 46).